Here is a 65-residue protein sequence, read N- to C-terminus: Small, acid-soluble spore protein H 3 (65 aa).

The protein belongs to the SspH family.

It localises to the spore core. This chain is Small, acid-soluble spore protein H 3, found in Geobacillus thermodenitrificans (strain NG80-2).